A 512-amino-acid polypeptide reads, in one-letter code: Alpha-amylase 1 (512 aa).

An N-terminal signal peptide occupies residues 1 to 25; that stretch reads MRFSTEGFTSKVVAAILAFSRLVSA. A disulfide bond links cysteine 66 and cysteine 74. A substrate-binding site is contributed by tryptophan 119. Asparagine 157 lines the Ca(2+) pocket. A substrate-binding site is contributed by histidine 158. Cysteine 186 and cysteine 200 are joined by a disulfide. Ca(2+) is bound by residues glutamate 198 and aspartate 211. Asparagine 233 carries N-linked (GlcNAc...) asparagine glycosylation. Arginine 240 is a substrate binding site. Ca(2+)-binding residues include aspartate 242, histidine 246, and glutamate 266. The active-site Nucleophile is the aspartate 242. Residue 245–246 coordinates substrate; sequence KH. Glutamate 266 serves as the catalytic Proton donor. Glycine 270 serves as a coordination point for substrate. Cysteine 276 and cysteine 319 are oxidised to a cystine. Residues aspartate 333 and arginine 380 each coordinate substrate. Cysteines 475 and 510 form a disulfide.

Belongs to the glycosyl hydrolase 13 family. Requires Ca(2+) as cofactor.

Its subcellular location is the secreted. It carries out the reaction Endohydrolysis of (1-&gt;4)-alpha-D-glucosidic linkages in polysaccharides containing three or more (1-&gt;4)-alpha-linked D-glucose units.. Alpha-amylase expression underlies catabolite repression by glucose. The sequence is that of Alpha-amylase 1 (AMY1) from Schwanniomyces occidentalis (Yeast).